The sequence spans 201 residues: ATP-dependent Clp protease proteolytic subunit (201 aa).

Serine 101 acts as the Nucleophile in catalysis. Histidine 126 is a catalytic residue.

It belongs to the peptidase S14 family. As to quaternary structure, fourteen ClpP subunits assemble into 2 heptameric rings which stack back to back to give a disk-like structure with a central cavity, resembling the structure of eukaryotic proteasomes.

It is found in the cytoplasm. The enzyme catalyses Hydrolysis of proteins to small peptides in the presence of ATP and magnesium. alpha-casein is the usual test substrate. In the absence of ATP, only oligopeptides shorter than five residues are hydrolyzed (such as succinyl-Leu-Tyr-|-NHMec, and Leu-Tyr-Leu-|-Tyr-Trp, in which cleavage of the -Tyr-|-Leu- and -Tyr-|-Trp bonds also occurs).. In terms of biological role, cleaves peptides in various proteins in a process that requires ATP hydrolysis. Has a chymotrypsin-like activity. Plays a major role in the degradation of misfolded proteins. The chain is ATP-dependent Clp protease proteolytic subunit from Francisella tularensis subsp. tularensis (strain FSC 198).